We begin with the raw amino-acid sequence, 307 residues long: Ornithine carbamoyltransferase (307 aa).

Carbamoyl phosphate is bound by residues 54–57 (STRT), Q81, R105, and 132–135 (HPCQ). L-ornithine-binding positions include N163, D221, and 225-226 (SM). Carbamoyl phosphate is bound by residues 261 to 262 (CL) and R289.

The protein belongs to the aspartate/ornithine carbamoyltransferase superfamily. OTCase family.

It is found in the cytoplasm. The enzyme catalyses carbamoyl phosphate + L-ornithine = L-citrulline + phosphate + H(+). It participates in amino-acid biosynthesis; L-arginine biosynthesis; L-arginine from L-ornithine and carbamoyl phosphate: step 1/3. Its function is as follows. Reversibly catalyzes the transfer of the carbamoyl group from carbamoyl phosphate (CP) to the N(epsilon) atom of ornithine (ORN) to produce L-citrulline. The protein is Ornithine carbamoyltransferase of Chromobacterium violaceum (strain ATCC 12472 / DSM 30191 / JCM 1249 / CCUG 213 / NBRC 12614 / NCIMB 9131 / NCTC 9757 / MK).